The primary structure comprises 1387 residues: Regulator of G-protein signaling 12 (1387 aa).

The PDZ domain maps to Ser21–Gly97. Residues Ser171 and Ser194 each carry the phosphoserine modification. Lys195 participates in a covalent cross-link: Glycyl lysine isopeptide (Lys-Gly) (interchain with G-Cter in SUMO2). The region spanning Val227–Phe339 is the PID domain. Disordered regions lie at residues Ala409 to Phe428 and Leu442 to Thr488. Residues His412 to Phe428 show a composition bias toward polar residues. Omega-N-methylarginine occurs at positions 524 and 633. The disordered stretch occupies residues Arg620–Phe650. Residues Ser661 and Ser671 each carry the phosphoserine modification. In terms of domain architecture, RGS spans Ser715–Val832. Residues Pro842–Ser934 form a disordered region. The segment covering Ser849–Lys869 has biased composition (low complexity). Residues Ser850 and Ser879 each carry the phosphoserine modification. Residues Asp914–Leu923 show a composition bias toward basic and acidic residues. A Phosphoserine modification is found at Ser943. 2 RBD domains span residues Lys962 to Arg1032 and Leu1034 to Arg1104. The segment covering Glu1103 to Lys1117 has biased composition (basic and acidic residues). Residues Glu1103 to Glu1168 are disordered. Positions Lys1122–Asn1133 are enriched in polar residues. The span at Ile1151–Glu1168 shows a compositional bias: basic and acidic residues. The region spanning Ala1187 to Leu1209 is the GoLoco domain. Disordered stretches follow at residues Pro1224–Thr1325 and Ala1349–Phe1387. Residues Ser1261–Pro1280 are compositionally biased toward low complexity. The segment covering Ser1315 to Thr1325 has biased composition (polar residues). The span at Leu1367–Thr1380 shows a compositional bias: pro residues.

Interacts with GNAI1, GNAI2 and GNAI3; the interactions are GDP-dependent. In terms of tissue distribution, detected in brain cortex GABAergic neurons, in striatum and substantia nigra, and in the Purkinje cell layer in the cerebellum and hippocampus (at protein level). Expressed at high levels in brain and lung and lower levels in testis, heart, and spleen.

Its subcellular location is the nucleus. The protein resides in the cytoplasm. It is found in the cell projection. It localises to the dendrite. The protein localises to the synapse. Regulates G protein-coupled receptor signaling cascades. Inhibits signal transduction by increasing the GTPase activity of G protein alpha subunits, thereby driving them into their inactive GDP-bound form. This Rattus norvegicus (Rat) protein is Regulator of G-protein signaling 12 (Rgs12).